The following is a 480-amino-acid chain: Salicylate hydroxylase asL1 (480 aa).

A helical membrane pass occupies residues 17–37 (PMEIAIVGGGIVGVILAIGLT). The FAD site is built by glutamate 47 and alanine 60. An N-linked (GlcNAc...) asparagine glycan is attached at asparagine 87. Arginine 131 is an FAD binding site. Asparagine 168 carries an N-linked (GlcNAc...) asparagine glycan. Catalysis depends on residues arginine 213 and tyrosine 246. Asparagine 250 carries N-linked (GlcNAc...) asparagine glycosylation. FAD contacts are provided by aspartate 329 and alanine 342. N-linked (GlcNAc...) asparagine glycans are attached at residues asparagine 400 and asparagine 464.

It belongs to the paxM FAD-dependent monooxygenase family. FAD serves as cofactor.

The protein resides in the membrane. It functions in the pathway secondary metabolite biosynthesis; terpenoid biosynthesis. Functionally, salicylate hydroxylase; part of the gene cluster that mediates the biosynthesis of xenovulene A, an unusual meroterpenoid that has potent inhibitory effects on the human gamma-aminobutyrate A (GABAA) benzodiazepine receptor. The first step of xenovulene A biosynthesis is the biosynthesis of 3-methylorcinaldehyde performed by the non-reducing polyketide synthase aspks1. The salicylate hydroxylase asL1 then catalyzes the oxidative dearomatization of 3-methylorcinaldehyde to yield a dearomatized hydroxycyclohexadione. The 2-oxoglutarate-dependent dioxygenase asL3 further catalyzes the oxidative ring expansion to provide the first tropolone metabolite. The cytochrome P450 monooxygenase asR2 allows the synthesis of tropolone hemiacetal. In parallel, a previously unrecognised class of terpene cyclase, asR6, produces alpha-humulene from farnesylpyrophosphate (FPP). The putative Diels-Alderase asR5 probably catalyzes the formation of the tropolone-humulene skeleton by linking humulene and the polyketide moiety. Oxidative-ring contractions catalyzed by asL4 and asL6 then processively remove carbon atoms from the polyketide to yield xenovulene A. The sequence is that of Salicylate hydroxylase asL1 from Sarocladium schorii (Acremonium strictum (strain IMI 501407)).